The sequence spans 292 residues: Bifunctional protein FolD (292 aa).

NADP(+) is bound by residues 166-168 (GRS), Ser191, and Ile232.

The protein belongs to the tetrahydrofolate dehydrogenase/cyclohydrolase family. As to quaternary structure, homodimer.

The enzyme catalyses (6R)-5,10-methylene-5,6,7,8-tetrahydrofolate + NADP(+) = (6R)-5,10-methenyltetrahydrofolate + NADPH. It carries out the reaction (6R)-5,10-methenyltetrahydrofolate + H2O = (6R)-10-formyltetrahydrofolate + H(+). It participates in one-carbon metabolism; tetrahydrofolate interconversion. Catalyzes the oxidation of 5,10-methylenetetrahydrofolate to 5,10-methenyltetrahydrofolate and then the hydrolysis of 5,10-methenyltetrahydrofolate to 10-formyltetrahydrofolate. The protein is Bifunctional protein FolD of Synechococcus sp. (strain RCC307).